A 105-amino-acid chain; its full sequence is Antitoxin HigA-1 (105 aa).

The HTH cro/C1-type domain maps to 15–69 (LKVEFLEPMGITSKALAEAMGVHRNTVSNLINGGVLTAPVAIKLAAALGNTPEFW). Positions 27 to 46 (SKALAEAMGVHRNTVSNLIN) form a DNA-binding region, H-T-H motif.

Its function is as follows. Antitoxin component of a type II toxin-antitoxin (TA) system that counteracts the effect of the HigB-1 toxin. Binds to its own promoter and regulates transcription of the higB-1/higA-1 operon. The polypeptide is Antitoxin HigA-1 (higA-1) (Vibrio cholerae serotype O1 (strain ATCC 39315 / El Tor Inaba N16961)).